The following is a 324-amino-acid chain: DNA-directed RNA polymerase subunit alpha (324 aa).

The interval M1–S228 is alpha N-terminal domain (alpha-NTD). The alpha C-terminal domain (alpha-CTD) stretch occupies residues R245–K324.

It belongs to the RNA polymerase alpha chain family. As to quaternary structure, homodimer. The RNAP catalytic core consists of 2 alpha, 1 beta, 1 beta' and 1 omega subunit. When a sigma factor is associated with the core the holoenzyme is formed, which can initiate transcription.

It carries out the reaction RNA(n) + a ribonucleoside 5'-triphosphate = RNA(n+1) + diphosphate. In terms of biological role, DNA-dependent RNA polymerase catalyzes the transcription of DNA into RNA using the four ribonucleoside triphosphates as substrates. The chain is DNA-directed RNA polymerase subunit alpha from Caldicellulosiruptor saccharolyticus (strain ATCC 43494 / DSM 8903 / Tp8T 6331).